A 77-amino-acid chain; its full sequence is Small ribosomal subunit protein bS18 (77 aa).

It belongs to the bacterial ribosomal protein bS18 family. In terms of assembly, part of the 30S ribosomal subunit. Forms a tight heterodimer with protein bS6.

Functionally, binds as a heterodimer with protein bS6 to the central domain of the 16S rRNA, where it helps stabilize the platform of the 30S subunit. This Desulforamulus reducens (strain ATCC BAA-1160 / DSM 100696 / MI-1) (Desulfotomaculum reducens) protein is Small ribosomal subunit protein bS18.